Here is a 157-residue protein sequence, read N- to C-terminus: Protein Smg (157 aa).

It belongs to the Smg family.

The polypeptide is Protein Smg (Buchnera aphidicola subsp. Acyrthosiphon pisum (strain 5A)).